The primary structure comprises 228 residues: Transcription factor zip-11 (228 aa).

The basic motif stretch occupies residues 166-202 (RKRQQNKVAAARYRDKQKAKWQDLLDQLEAEEDRNQR). The 59-residue stretch at 166–224 (RKRQQNKVAAARYRDKQKAKWQDLLDQLEAEEDRNQRLKLQAGHLEKEVAEMRQAFLAK) folds into the bZIP domain. Residues 203–210 (LKLQAGHL) are leucine-zipper.

The protein belongs to the bZIP family. In terms of assembly, interacts with CCAAT/enhancer-binding protein cebp-2.

It is found in the nucleus. In terms of biological role, transcription factor. Involved in modulating innate immune response pathways, acting to promote resistance against infection by Gram-negative bacterium P.aeruginosa strain PA14. May act as part of a feedback regulatory loop with the pmk-1/p38 MAPK pathway. May also function in concert with CCAAT/enhancer-binding protein cebp-2 to mediate immune responses, independently of the pmk-1/p38 MAPK pathway. The protein is Transcription factor zip-11 of Caenorhabditis elegans.